The sequence spans 399 residues: Long-chain primary alcohol dehydrogenase AdhA (399 aa).

This sequence belongs to the iron-containing alcohol dehydrogenase family. Homotetramer. Requires Zn(2+) as cofactor.

It catalyses the reaction a primary alcohol + NADP(+) = an aldehyde + NADPH + H(+). Alcohol dehydrogenase active against primary long-chain alcohols. Pentan-1-ol is the optimum substrate in vitro, but also shows efficient dehydrogenase activity on propanol, hexanol, and ethanol. The sequence is that of Long-chain primary alcohol dehydrogenase AdhA (adhA) from Thermoanaerobacter ethanolicus (Clostridium thermohydrosulfuricum).